The sequence spans 59 residues: Large ribosomal subunit protein bL32 (59 aa).

The segment covering 1-19 (MPVPKRRMSRSNTRSRRAQ) has biased composition (basic residues). Residues 1–20 (MPVPKRRMSRSNTRSRRAQW) are disordered.

It belongs to the bacterial ribosomal protein bL32 family.

This is Large ribosomal subunit protein bL32 from Acidothermus cellulolyticus (strain ATCC 43068 / DSM 8971 / 11B).